The chain runs to 445 residues: Glutamyl-tRNA(Gln) amidotransferase subunit D (445 aa).

One can recognise an Asparaginase/glutaminase domain in the interval 93-425 (SEIKIISTGG…EKIRSLMISN (333 aa)). Catalysis depends on residues Thr103, Thr179, Asp180, and Lys258.

Belongs to the asparaginase 1 family. GatD subfamily. Heterodimer of GatD and GatE.

The catalysed reaction is L-glutamyl-tRNA(Gln) + L-glutamine + ATP + H2O = L-glutaminyl-tRNA(Gln) + L-glutamate + ADP + phosphate + H(+). Allows the formation of correctly charged Gln-tRNA(Gln) through the transamidation of misacylated Glu-tRNA(Gln) in organisms which lack glutaminyl-tRNA synthetase. The reaction takes place in the presence of glutamine and ATP through an activated gamma-phospho-Glu-tRNA(Gln). The GatDE system is specific for glutamate and does not act on aspartate. This Saccharolobus islandicus (strain L.S.2.15 / Lassen #1) (Sulfolobus islandicus) protein is Glutamyl-tRNA(Gln) amidotransferase subunit D.